The chain runs to 544 residues: Chaperonin GroEL (544 aa).

Residues 30–33 (TLGP), K51, 87–91 (DGTTT), G415, 481–483 (DAL), and D497 each bind ATP.

Belongs to the chaperonin (HSP60) family. As to quaternary structure, forms a cylinder of 14 subunits composed of two heptameric rings stacked back-to-back. Interacts with the co-chaperonin GroES.

The protein localises to the cytoplasm. It catalyses the reaction ATP + H2O + a folded polypeptide = ADP + phosphate + an unfolded polypeptide.. Together with its co-chaperonin GroES, plays an essential role in assisting protein folding. The GroEL-GroES system forms a nano-cage that allows encapsulation of the non-native substrate proteins and provides a physical environment optimized to promote and accelerate protein folding. The protein is Chaperonin GroEL of Chlamydia trachomatis serovar D (strain ATCC VR-885 / DSM 19411 / UW-3/Cx).